The primary structure comprises 441 residues: MSNVTHQPKIGFVSLGCPKNLVDSERILTELRTEGYDVVPRYDDADMVIVNTCGFIDSAVQESLEAIGEALNENGKVIVTGCLGAKEDQIREVHPKVLEITGPHSYEQVLQHVHHYVPKPKHNPFLSLVPEQGVKLTPRHYAYLKISEGCNHRCTFCIIPSMRGDLVSRPIGDVLSEAKRLVDAGVKEILVISQDTSAYGVDVKHRTGFHNGEPVKTSMVSLCEQLSKLGVWTRLHYVYPYPHVDDVIPLMAEGKILPYLDIPLQHASPRILKLMKRPGSVDRQLARIKQWREICPELTLRSTFIVGFPGETEEDFQMLLDFLKEARLDRVGCFKYSPVEGAGANELPDQVPEEVKEERWNRFMQLQQQISAERLQEKVGREILVIVDEVDEEGAIGRSMADAPEIDGAVYLNGETNVKLGDIVRVKVENADEYDLWGSRV.

Residues 8-118 enclose the MTTase N-terminal domain; that stretch reads PKIGFVSLGC…VLQHVHHYVP (111 aa). [4Fe-4S] cluster is bound by residues cysteine 17, cysteine 53, cysteine 82, cysteine 150, cysteine 154, and cysteine 157. Positions 136–373 constitute a Radical SAM core domain; sequence LTPRHYAYLK…MQLQQQISAE (238 aa). The 66-residue stretch at 376–441 folds into the TRAM domain; it reads QEKVGREILV…DEYDLWGSRV (66 aa).

The protein belongs to the methylthiotransferase family. RimO subfamily. It depends on [4Fe-4S] cluster as a cofactor.

The protein resides in the cytoplasm. It catalyses the reaction L-aspartate(89)-[ribosomal protein uS12]-hydrogen + (sulfur carrier)-SH + AH2 + 2 S-adenosyl-L-methionine = 3-methylsulfanyl-L-aspartate(89)-[ribosomal protein uS12]-hydrogen + (sulfur carrier)-H + 5'-deoxyadenosine + L-methionine + A + S-adenosyl-L-homocysteine + 2 H(+). Functionally, catalyzes the methylthiolation of an aspartic acid residue of ribosomal protein uS12. In Salmonella paratyphi A (strain ATCC 9150 / SARB42), this protein is Ribosomal protein uS12 methylthiotransferase RimO.